Here is a 185-residue protein sequence, read N- to C-terminus: Elongation factor P (185 aa).

Belongs to the elongation factor P family.

The protein localises to the cytoplasm. The protein operates within protein biosynthesis; polypeptide chain elongation. Functionally, involved in peptide bond synthesis. Stimulates efficient translation and peptide-bond synthesis on native or reconstituted 70S ribosomes in vitro. Probably functions indirectly by altering the affinity of the ribosome for aminoacyl-tRNA, thus increasing their reactivity as acceptors for peptidyl transferase. The chain is Elongation factor P from Dechloromonas aromatica (strain RCB).